The chain runs to 199 residues: DnaJ homolog subfamily C member 5B (199 aa).

Ser-14 is modified (phosphoserine). The region spanning 19–84 (ALYEILGLHK…SKRSIYDKYG (66 aa)) is the J domain.

As to quaternary structure, interacts with the chaperone complex consisting of HSC70 and SGTA. Post-translationally, palmitoylated. Palmitoylation is not required for membrane association. Testis specific.

It is found in the membrane. This is DnaJ homolog subfamily C member 5B (DNAJC5B) from Homo sapiens (Human).